We begin with the raw amino-acid sequence, 287 residues long: Putative holocytochrome-c1 synthase (287 aa).

The span at 1–12 (MRGFGSDSSQAS) shows a compositional bias: polar residues. Disordered stretches follow at residues 1–63 (MRGF…QPSS) and 81–100 (QSQS…SAPL). Composition is skewed to low complexity over residues 31 to 63 (QARA…QPSS) and 81 to 92 (QSQSANSTQQAQ).

This sequence belongs to the cytochrome c-type heme lyase family.

It is found in the mitochondrion inner membrane. The catalysed reaction is holo-[cytochrome c] = apo-[cytochrome c] + heme b. In terms of biological role, probable lyase that catalyzes the covalent linking of the heme group to the cytochrome C apoprotein to produce the mature functional cytochrome. In Chaetomium thermophilum (strain DSM 1495 / CBS 144.50 / IMI 039719) (Thermochaetoides thermophila), this protein is Putative holocytochrome-c1 synthase.